The following is a 277-amino-acid chain: Carbonyl reductase [NADPH] 1 (277 aa).

Serine 2 carries the post-translational modification N-acetylserine. Residues serine 2 and serine 30 each carry the phosphoserine modification. Residues 10–34 (VTGG…GDVV), 63–64 (DI), and asparagine 90 contribute to the NADP(+) site. Residues 95–97 (FKV) and glutamine 106 each bind glutathione. Serine 140 provides a ligand contact to substrate. Residue 193–194 (AY) coordinates glutathione. Tyrosine 194 (proton acceptor) is an active-site residue. NADP(+)-binding positions include 194-198 (YGVTK) and 231-233 (VRT). At lysine 239 the chain carries N6-1-carboxyethyl lysine.

The protein belongs to the short-chain dehydrogenases/reductases (SDR) family. In terms of assembly, monomer.

It localises to the cytoplasm. It catalyses the reaction a secondary alcohol + NADP(+) = a ketone + NADPH + H(+). The enzyme catalyses prostaglandin F2alpha + NADP(+) = prostaglandin E2 + NADPH + H(+). The catalysed reaction is prostaglandin E1 + NADP(+) = 15-oxoprostaglandin E1 + NADPH + H(+). It carries out the reaction menadione + NADPH + H(+) = menadiol + NADP(+). It catalyses the reaction prostaglandin D2 + NADP(+) = 15-oxoprostaglandin D2 + NADPH + H(+). The enzyme catalyses prostaglandin E2 + NADP(+) = 15-oxoprostaglandin E2 + NADPH + H(+). The catalysed reaction is prostaglandin F2alpha + NADP(+) = 15-oxoprostaglandin F2alpha + NADPH + H(+). It carries out the reaction daunorubicin + NADPH + H(+) = 13-dihydrodaunorubicin + NADP(+). It catalyses the reaction S-nitrosoglutathione + NADPH + H(+) = S-(hydroxysulfenamide)glutathione + NADP(+). The enzyme catalyses a primary alcohol + NADP(+) = an aldehyde + NADPH + H(+). The catalysed reaction is cortisol + NADPH + H(+) = 20beta-dihydrocortisol + NADP(+). It carries out the reaction corticosterone + NADPH + H(+) = 20beta-dihydrocorticosterone + NADP(+). Its function is as follows. NADPH-dependent reductase with broad substrate specificity. Catalyzes the reduction of a wide variety of carbonyl compounds including quinones, prostaglandins, menadione, plus various xenobiotics. Catalyzes the reduction of the antitumor anthracyclines doxorubicin and daunorubicin to the cardiotoxic compounds doxorubicinol and daunorubicinol. Can convert prostaglandin E to prostaglandin F2-alpha. Can bind glutathione, which explains its higher affinity for glutathione-conjugated substrates. Catalyzes the reduction of S-nitrosoglutathione. In addition, participates in the glucocorticoid metabolism by catalyzing the NADPH-dependent cortisol/corticosterone into 20beta-dihydrocortisol (20b-DHF) or 20beta-corticosterone (20b-DHB), which are weak agonists of NR3C1 and NR3C2 in adipose tissue. The chain is Carbonyl reductase [NADPH] 1 from Pongo abelii (Sumatran orangutan).